We begin with the raw amino-acid sequence, 396 residues long: Elongation factor Tu (396 aa).

In terms of domain architecture, tr-type G spans 10 to 206; that stretch reads KPHVNVGTIG…ALDSYIPTPE (197 aa). A G1 region spans residues 19-26; sequence GHVDHGKT. 19–26 is a binding site for GTP; sequence GHVDHGKT. Mg(2+) is bound at residue T26. The G2 stretch occupies residues 60–64; that stretch reads GITIN. The segment at 81 to 84 is G3; sequence DCPG. GTP is bound by residues 81–85 and 136–139; these read DCPGH and NKCD. A G4 region spans residues 136–139; sequence NKCD. The tract at residues 174 to 176 is G5; that stretch reads SAK.

This sequence belongs to the TRAFAC class translation factor GTPase superfamily. Classic translation factor GTPase family. EF-Tu/EF-1A subfamily. As to quaternary structure, monomer.

It is found in the cytoplasm. The catalysed reaction is GTP + H2O = GDP + phosphate + H(+). Its function is as follows. GTP hydrolase that promotes the GTP-dependent binding of aminoacyl-tRNA to the A-site of ribosomes during protein biosynthesis. This Methylibium petroleiphilum (strain ATCC BAA-1232 / LMG 22953 / PM1) protein is Elongation factor Tu.